Here is a 271-residue protein sequence, read N- to C-terminus: Ubiquitin thioesterase OTUB1 (271 aa).

An N-acetylalanine modification is found at Ala-2. A Phosphoserine modification is found at Ser-16. Phosphotyrosine; by SRC is present on Tyr-26. The 192-residue stretch at 80–271 (SYIRKTRPDG…RPGHYDILYK (192 aa)) folds into the OTU domain. The active site involves Asp-88. Catalysis depends on Cys-91, which acts as the Nucleophile. Ubiquitin-conjugating enzyme E2 binding regions lie at residues 130-138 (FTEFTIEDF) and 169-177 (DYLVVYLRL). Residues 189-195 (FFEHFIE) form a free ubiquitin binding region. Positions 206 to 213 (QEVEPMCK) are ubiquitin-conjugating enzyme E2 binding. 2 free ubiquitin binding regions span residues 214-221 (ESDHIHII) and 245-251 (NPHIFPE). His-265 is a catalytic residue.

It belongs to the peptidase C65 family. As to quaternary structure, interacts with FUS and RACK1. Interacts with UBE2D1/UBCH5A, UBE2W/UBC16 and UBE2N/UBC13. In terms of assembly, interacts with RNF128. Forms a ternary complex with RNF128 and USP8. Interacts with the C-terminal UCH catalytic domain of USP8. Interacts with RNF128. Does not associate with USP8. Post-translationally, phosphorylation at Tyr-26 by SRC and SRMS promotes deubiquitination of RPTOR via a non-catalytic process. In terms of tissue distribution, isoform 1 is ubiquitous. Isoform 2 is expressed only in lymphoid tissues such as tonsils, lymph nodes and spleen, as well as peripheral blood mononuclear cells.

The protein localises to the cytoplasm. It carries out the reaction Thiol-dependent hydrolysis of ester, thioester, amide, peptide and isopeptide bonds formed by the C-terminal Gly of ubiquitin (a 76-residue protein attached to proteins as an intracellular targeting signal).. With respect to regulation, by free ubiquitin: binding of free ubiquitin triggers conformational changes in the OTU domain and formation of a ubiquitin-binding helix in the N-terminus, promoting binding of the conjugated donor ubiquitin in UBE2N/UBC13 to OTUB1. In terms of biological role, hydrolase that can specifically remove 'Lys-48'-linked conjugated ubiquitin from proteins and plays an important regulatory role at the level of protein turnover by preventing degradation. Regulator of T-cell anergy, a phenomenon that occurs when T-cells are rendered unresponsive to antigen rechallenge and no longer respond to their cognate antigen. Acts via its interaction with RNF128/GRAIL, a crucial inductor of CD4 T-cell anergy. Isoform 1 destabilizes RNF128, leading to prevent anergy. In contrast, isoform 2 stabilizes RNF128 and promotes anergy. Surprisingly, it regulates RNF128-mediated ubiquitination, but does not deubiquitinate polyubiquitinated RNF128. Deubiquitinates estrogen receptor alpha (ESR1). Mediates deubiquitination of 'Lys-48'-linked polyubiquitin chains, but not 'Lys-63'-linked polyubiquitin chains. Not able to cleave di-ubiquitin. Also capable of removing NEDD8 from NEDD8 conjugates, but with a much lower preference compared to 'Lys-48'-linked ubiquitin. Plays a key non-catalytic role in DNA repair regulation by inhibiting activity of RNF168, an E3 ubiquitin-protein ligase that promotes accumulation of 'Lys-63'-linked histone H2A and H2AX at DNA damage sites. Inhibits RNF168 independently of ubiquitin thioesterase activity by binding and inhibiting UBE2N/UBC13, the E2 partner of RNF168, thereby limiting spreading of 'Lys-63'-linked histone H2A and H2AX marks. Inhibition occurs by binding to free ubiquitin: free ubiquitin acts as an allosteric regulator that increases affinity for UBE2N/UBC13 and disrupts interaction with UBE2V1. The OTUB1-UBE2N/UBC13-free ubiquitin complex adopts a configuration that mimics a cleaved 'Lys48'-linked di-ubiquitin chain. Acts as a regulator of mTORC1 and mTORC2 complexes. When phosphorylated at Tyr-26, acts as an activator of the mTORC1 complex by mediating deubiquitination of RPTOR via a non-catalytic process: acts by binding and inhibiting the activity of the ubiquitin-conjugating enzyme E2 (UBE2D1/UBCH5A, UBE2W/UBC16 and UBE2N/UBC13), thereby preventing ubiquitination of RPTOR. Can also act as an inhibitor of the mTORC1 and mTORC2 complexes in response to amino acids by mediating non-catalytic deubiquitination of DEPTOR. This is Ubiquitin thioesterase OTUB1 (OTUB1) from Homo sapiens (Human).